The following is a 370-amino-acid chain: D-alanine--D-alanine ligase (370 aa).

Residues 144–352 (KKIFADAGIP…YGALIERLVD (209 aa)) form the ATP-grasp domain. 177–232 (EEVLTYPVFVKPANLGSSVGISKATNKKELVDAMTEAFLYDRRVVVEQGVVAREIE) provides a ligand contact to ATP. Mg(2+)-binding residues include aspartate 306, glutamate 319, and asparagine 321.

This sequence belongs to the D-alanine--D-alanine ligase family. It depends on Mg(2+) as a cofactor. Mn(2+) serves as cofactor.

The protein localises to the cytoplasm. It carries out the reaction 2 D-alanine + ATP = D-alanyl-D-alanine + ADP + phosphate + H(+). Its pathway is cell wall biogenesis; peptidoglycan biosynthesis. Its function is as follows. Cell wall formation. This chain is D-alanine--D-alanine ligase, found in Listeria monocytogenes serovar 1/2a (strain ATCC BAA-679 / EGD-e).